The primary structure comprises 560 residues: Choline/ethanolamine transporter FLVCR1 (560 aa).

Residues Met1 to Tyr22 form a disordered region. Topologically, residues Met1 to Pro99 are cytoplasmic. Residue Ser56 is modified to Phosphoserine. Positions Gln68–Pro99 are disordered. A compositionally biased stretch (low complexity) spans Pro83–Gly95. A helical transmembrane segment spans residues Gln100–Gln124. Over Trp125–Ser142 the chain is Extracellular. A helical membrane pass occupies residues Ser143–Thr170. Residues Arg171–Gly172 lie on the Cytoplasmic side of the membrane. Residues Leu173–Cys192 form a helical membrane-spanning segment. Topologically, residues Ala193 to Leu199 are extracellular. Residues Phe200–Trp228 form a helical membrane-spanning segment. Gln214 is a binding site for ethanolamine. The Cytoplasmic segment spans residues Phe229 to Glu233. Residues Val234 to Leu259 traverse the membrane as a helical segment. Over Val260 to Asn265 the chain is Extracellular. The N-linked (GlcNAc...) asparagine glycan is linked to Asn265. The helical transmembrane segment at Asn266–Ala295 threads the bilayer. The Cytoplasmic portion of the chain corresponds to Phe296–Asn331. Residues Val332 to Tyr362 traverse the membrane as a helical segment. At Tyr363–Glu366 the chain is on the extracellular side. The chain crosses the membrane as a helical span at residues Glu367–Thr395. Topologically, residues Lys396 to Ile397 are cytoplasmic. The helical transmembrane segment at Tyr398–Leu420 threads the bilayer. Residues Asp421–Gly423 are Extracellular-facing. The helical transmembrane segment at Tyr424 to Ile453 threads the bilayer. At Thr454–Thr461 the chain is on the cytoplasmic side. A helical membrane pass occupies residues Ser462 to Asp487. Gln471 provides a ligand contact to ethanolamine. Position 471 (Gln471) interacts with choline. The Extracellular segment spans residues Tyr488–Ser489. A helical transmembrane segment spans residues Pro490–Lys512. Residues Ser513–Ile560 are Cytoplasmic-facing. Positions Thr537–Ile560 are disordered. Phosphoserine is present on Ser541. Polar residues predominate over residues Ile550–Ile560.

The protein belongs to the major facilitator superfamily. Feline leukemia virus subgroup C receptor (TC 2.A.1.28.1) family.

Its subcellular location is the cell membrane. The catalysed reaction is choline(out) = choline(in). The enzyme catalyses ethanolamine(in) = ethanolamine(out). It catalyses the reaction heme b(in) = heme b(out). Functionally, uniporter that mediates the transport of extracellular choline and ethanolamine into cells, thereby playing a key role in phospholipid biosynthesis. Choline and ethanolamine are the precursors of phosphatidylcholine and phosphatidylethanolamine, respectively, the two most abundant phospholipids. Transport is not coupled with proton transport and is exclusively driven by the choline (or ethanolamine) gradient across the plasma membrane. Also acts as a heme b transporter that mediates heme efflux from the cytoplasm to the extracellular compartment. In terms of biological role, (Microbial infection) Confers susceptibility to Feline leukemia virus subgroup C (FeLV-C) infection, which is associated with fatal erythroid aplasia, also known as aplastic anemia. The protein is Choline/ethanolamine transporter FLVCR1 (FLVCR1) of Felis catus (Cat).